The chain runs to 132 residues: UPF0299 membrane protein YohJ (132 aa).

The Periplasmic segment spans residues 1 to 6 (MSKTLN). A helical membrane pass occupies residues 7–27 (IIWQYLRAFVLIYACLYAGIF). Residues 28–30 (IAS) lie on the Cytoplasmic side of the membrane. A helical membrane pass occupies residues 31–51 (LLPVTIPGSIIGMLILFVLLA). Over 52–62 (LQILPAKWVNP) the chain is Periplasmic. The chain crosses the membrane as a helical span at residues 63 to 83 (GCYVLIRYMALLFVPIGVGVM). Topologically, residues 84–92 (QYFDLLRAQ) are cytoplasmic. A helical membrane pass occupies residues 93–113 (FGPVVVSCAISTLVVFLVVSW). Over 114-132 (SSQLVHGERKVVGQKGSEE) the chain is Periplasmic.

It belongs to the UPF0299 family.

The protein resides in the cell inner membrane. This is UPF0299 membrane protein YohJ (yohJ) from Escherichia coli O157:H7.